The following is a 169-amino-acid chain: Der GTPase-activating protein YihI (169 aa).

Disordered regions lie at residues 1-83 and 150-169; these read MNPL…PTKP and DEEE…LKGN. The span at 21–30 shows a compositional bias: basic and acidic residues; sequence NREELNAEGR. Basic residues predominate over residues 31–40; it reads ARKREKKHRG. Composition is skewed to basic and acidic residues over residues 51–66 and 150–161; these read SGDK…DPRL and DEEEREEEKQDD.

This sequence belongs to the YihI family. Interacts with Der.

In terms of biological role, a GTPase-activating protein (GAP) that modifies Der/EngA GTPase function. May play a role in ribosome biogenesis. The protein is Der GTPase-activating protein YihI of Photorhabdus laumondii subsp. laumondii (strain DSM 15139 / CIP 105565 / TT01) (Photorhabdus luminescens subsp. laumondii).